We begin with the raw amino-acid sequence, 310 residues long: Dopamine receptor-interacting protein 1 (310 aa).

As to quaternary structure, interacts with DRD1.

Could be a regulator of the dopamine receptor signaling pathway. The sequence is that of Dopamine receptor-interacting protein 1 from Homo sapiens (Human).